A 571-amino-acid polypeptide reads, in one-letter code: Ferroportin (571 aa).

The Cytoplasmic segment spans residues 1-23 (MTRAGDHNRQRGCCGSLADYLTS). Residues 24–53 (AKFLLYLGHSLSTWGDRMWHFAVSVFLVEL) form a helical membrane-spanning segment. Fe cation-binding residues include Asp-39 and His-43. At 54 to 57 (YGNS) the chain is on the extracellular side. The chain crosses the membrane as a helical span at residues 58–84 (LLLTAVYGLVVAGSVLVLGAIIGDWVD). The Cytoplasmic portion of the chain corresponds to 85–87 (KNA). A helical membrane pass occupies residues 88–118 (RLKVAQTSLVVQNVSVILCGIILMMVFLHKH). The Extracellular segment spans residues 119–126 (ELLTMYHG). Residues 127–162 (WVLTSCYILIITIANIANLASTATAITIQRDWIVVV) traverse the membrane as a helical segment. Topologically, residues 163–164 (AG) are cytoplasmic. Residues 165–195 (EDRSKLANMNATIRRIDQLTNILAPMAVGQI) traverse the membrane as a helical segment. Over 196–202 (MTFGSPV) the chain is Extracellular. Residues 203 to 229 (IGCGFISGWNLVSMCVEYVLLWKVYQK) form a helical membrane-spanning segment. The Cytoplasmic segment spans residues 230 to 306 (TPALAVKAGL…DGWVSYYNQP (77 aa)). Residues 307–333 (VFLAGMGLAFLYMTVLGFDCITTGYAY) traverse the membrane as a helical segment. Fe cation is bound at residue Cys-326. Over 334-338 (TQGLS) the chain is Extracellular. The chain crosses the membrane as a helical span at residues 339–366 (GSILSILMGASAITGIMGTVAFTWLRRK). At 367–368 (CG) the chain is on the cytoplasmic side. The chain crosses the membrane as a helical span at residues 369-391 (LVRTGLISGLAQLSCLILCVISV). The Extracellular portion of the chain corresponds to 392 to 453 (FMPGSPLDLS…ETSPESVPII (62 aa)). N-linked (GlcNAc...) asparagine glycosylation occurs at Asn-434. A helical transmembrane segment spans residues 454 to 483 (SVSLLFAGVIAARIGLWSFDLTVTQLLQEN). Residues 484–488 (VIESE) are Cytoplasmic-facing. A helical transmembrane segment spans residues 489 to 513 (RGIINGVQNSMNYLLDLLHFIMVIL). Fe cation is bound at residue His-507. Over 514–516 (APN) the chain is Extracellular. The helical transmembrane segment at 517–542 (PEAFGLLVLISVSFVAMGHIMYFRFA) threads the bilayer. At 543 to 571 (QNTLGNKLFACGPDAKEVRKENQANTSVV) the chain is on the cytoplasmic side.

It belongs to the ferroportin (FP) (TC 2.A.100) family. SLC40A subfamily. In terms of assembly, identified in a complex with STOM. Interacts with HAMP; affinity of the peptide hormone HAMP for SLC40A1 increases by 80-fold in the presence of iron and the interaction promotes SLC40A1 ubiquitination and degradation. Part of a complex composed of SLC40A1/ferroportin, TF/transferrin and HEPH/hephaestin that transfers iron from cells to transferrin. In terms of processing, polyubiquitinated by RNF217; leading to proteasomal degradation. Under conditions of high systemic iron levels, both the hormone peptide hepcidin/HAMP and holo(iron bound)-transferrin/TF induce the ubiquitination, internalization and proteasomal degradation of SLC40A1 to control iron release from cells. Detected in erythrocytes (at protein level). Expressed in placenta, intestine, muscle and spleen. Highly expressed in mature red blood.

Its subcellular location is the cell membrane. The protein localises to the basolateral cell membrane. It carries out the reaction Fe(2+)(in) = Fe(2+)(out). In terms of biological role, transports Fe(2+) from the inside of a cell to the outside of the cell, playing a key role for maintaining systemic iron homeostasis. Transports iron from intestinal, splenic, hepatic cells, macrophages and erythrocytes into the blood to provide iron to other tissues. Controls therefore dietary iron uptake, iron recycling by macrophages and erythrocytes, and release of iron stores in hepatocytes. When iron is in excess in serum, circulating HAMP/hepcidin levels increase resulting in a degradation of SLC40A1, thus limiting the iron efflux to plasma. The protein is Ferroportin of Homo sapiens (Human).